We begin with the raw amino-acid sequence, 187 residues long: Decorin-binding protein B (187 aa).

The signal sequence occupies residues 1-20 (MKIGKLNSIVIALFFKLLVA).

The protein belongs to the decorin-binding protein family.

Functionally, binds to decorin which may mediate the adherence of B.burgdorferi to collagen fibers in skin and other tissues. The sequence is that of Decorin-binding protein B (dbpB) from Borreliella burgdorferi (strain ATCC 35210 / DSM 4680 / CIP 102532 / B31) (Borrelia burgdorferi).